The primary structure comprises 452 residues: Scaffold protein ILK (452 aa).

Met1 bears the N-acetylmethionine mark. ANK repeat units lie at residues Asp2–Gly30, Asp31–Met63, Asn64–Val96, Asn97–Cys129, and Asn130–Arg174. The interaction with LIMS1 stretch occupies residues His33–Lys139. Residue Thr173 is modified to Phosphothreonine. Residues Gly180–Trp212 form a PH-like; mediates interaction with TGFB1I1 region. Position 186 is a phosphoserine (Ser186). Residues Leu193–Leu446 form the Protein kinase domain. The ATP site is built by Asn200, Asn202, His203, and Ser204. Ser246 carries the post-translational modification Phosphoserine. Residues His270, Met272, and Asn279 each contribute to the ATP site. Asp339 contributes to the Mg(2+) binding site. Lys341 is an ATP binding site. The Nuclear localization signal signature appears at Lys363 to Arg371. Lys426 is subject to N6-acetyllysine.

It belongs to the protein kinase superfamily. TKL Ser/Thr protein kinase family. Component of the heterotrimeric IPP (ILK-PINCH-PARVIN) complex composed of ILK, LIMS1/PINCH and PARVA; the complex binds to F-actin via the C-terminal tail of LIMS1 and the N-terminal region of PARVA, promoting F-actin filament bundling. Formation of the IPP complex is dependent on protein kinase C and precedes integrin-mediated cell adhesion and spreading. ILK also interacts with LIMS2/PINCH2 and with PARVB and PARVG which may substitute for LIMS1 and PARVA in the IPP complex; PARVA and PARVB compete for the same binding site. Interaction with PARVG promotes the establishment of cell polarity required for leukocyte migration. Interacts with the cytoplasmic domain of integrin ITGB1 and may also interact with integrins ITGB2, ITGB3 and/or ITGB5. Interacts probably also with TGFB1I1. Interacts (via ANK repeats) with EPHA1 (via SAM domain); stimulated by EFNA1 but independent of the kinase activity of EPHA1. Interacts with FERMT2. Interacts with LIMD2; leading to activate the protein kinase activity. Interacts with PXN/PAXILLIN (via LD motif 4). Interacts with CCDC25 (via cytoplasmic region); initiating the ILK-PARVB cascade to induce cytoskeleton rearrangement and directional migration of cells. Interacts with IQGAP1; the interaction is required for localization of IQGAP1 to the cell cortex. Post-translationally, phosphorylation by PAK1 modulates ILK subcellular location by promoting its nuclear export. As to expression, highly expressed in lung, heart, kidney, liver, brain, spleen and skeletal muscle. Weakly expressed in testis.

It is found in the cell junction. It localises to the focal adhesion. Its subcellular location is the cell membrane. The protein localises to the cytoplasm. The protein resides in the myofibril. It is found in the sarcomere. It localises to the cell projection. Its subcellular location is the lamellipodium. The protein localises to the nucleus. The protein resides in the cytoskeleton. It is found in the microtubule organizing center. It localises to the centrosome. Its subcellular location is the cell cortex. Functionally, scaffold protein which mediates protein-protein interactions during a range of cellular events including focal adhesion assembly, cell adhesion and cell migration. Regulates integrin-mediated signal transduction by contributing to inside-out integrin activation. Recruits PARVA and LIMS1/PITCH to form the heterotrimeric IPP (ILK-PINCH-PARVIN) complex which binds to F-actin via the C-terminal tail of LIMS1 and the N-terminal region of PARVA, promoting F-actin filament bundling, a process required to generate force for actin cytoskeleton reorganization and subsequent dynamic cell adhesion events such as cell spreading and migration. Binding to PARVA promotes effective assembly of ILK into focal adhesions while PARVA-bound ILK can simultaneously engage integrin-beta cytoplasmic tails to mediate cell adhesion. Plays a role with PARVG in promoting the cell adhesion and spreading of leukocytes. Acts as an upstream effector of both AKT1/PKB and GSK3. Mediates trafficking of caveolae to the cell surface in an ITGB1-dependent manner by promoting the recruitment of IQGAP1 to the cell cortex which cooperates with its effector DIAPH1 to locally stabilize microtubules and allow stable insertion of caveolae into the plasma membrane. Required for the maintenance of mitotic spindle integrity by promoting phosphorylation of TACC3 by AURKA. Associates with chromatin and may act as a negative regulator of transcription when located in the nucleus. The chain is Scaffold protein ILK from Mus musculus (Mouse).